The chain runs to 254 residues: Receptor expression-enhancing protein 3 (254 aa).

The next 3 helical transmembrane spans lie at M1–Y21, Y35–A55, and L59–P79. A disordered region spans residues D162 to K232. Residues E198 to E212 are compositionally biased toward acidic residues. T200 carries the post-translational modification Phosphothreonine. Position 209 is a phosphoserine (S209).

Belongs to the DP1 family.

Its subcellular location is the endoplasmic reticulum membrane. Functionally, microtubule-binding protein required to ensure proper cell division and nuclear envelope reassembly by sequestering the endoplasmic reticulum away from chromosomes during mitosis. Probably acts by clearing the endoplasmic reticulum membrane from metaphase chromosomes. The polypeptide is Receptor expression-enhancing protein 3 (Reep3) (Mus musculus (Mouse)).